A 553-amino-acid chain; its full sequence is Putative transport protein KPN78578_40470 (553 aa).

A run of 5 helical transmembrane segments spans residues 4–24, 28–48, 65–85, 95–115, and 158–178; these read IALTVSVLALVAVVGLWIGNV, GVGFGIGGVLFGGIIVGHFVD, FGLILFVYTIGIQVGPGFFAS, LFAILIVILGGLVTAVLHKLF, and MSYAMAYPFGICGILLTMWLV. RCK C-terminal domains are found at residues 192-276 and 279-361; these read RFEE…VIGQ and ATSL…ELGN. 6 consecutive transmembrane segments (helical) span residues 371 to 391, 403 to 425, 437 to 457, 464 to 484, 493 to 513, and 532 to 552; these read MLPVFIGIGLGVLLGSIPLFI, AGGPLIMALILGRIGSIGKLYWF, LGIVLFLAVVGLKSGGDFVAT, LSWIAYGIFITAIPLLTVGVL, YLTLCGMLAGSMTDPPALAFA, and PLVMFLRIITPQLLAVLFWGL.

This sequence belongs to the AAE transporter (TC 2.A.81) family. YidE subfamily.

The protein resides in the cell membrane. This is Putative transport protein KPN78578_40470 from Klebsiella pneumoniae subsp. pneumoniae (strain ATCC 700721 / MGH 78578).